The chain runs to 639 residues: Tetracycline resistance protein TetM from transposon Tn5251 (639 aa).

One can recognise a tr-type G domain in the interval 1–242 (MKIINIGVLA…VITNKFYSST (242 aa)). Residues 10 to 17 (AHVDAGKT), 74 to 78 (DTPGH), and 128 to 131 (NKID) contribute to the GTP site.

It belongs to the TRAFAC class translation factor GTPase superfamily. Classic translation factor GTPase family. TetM/TetO subfamily.

Its function is as follows. Abolishes the inhibitory effect of tetracyclin on protein synthesis by a non-covalent modification of the ribosomes. The protein is Tetracycline resistance protein TetM from transposon Tn5251 (tetM(5251)) of Streptococcus pneumoniae.